Consider the following 252-residue polypeptide: 5'-nucleotidase SurE (252 aa).

The a divalent metal cation site is built by Asp8, Asp9, Ser39, and Asn91.

It belongs to the SurE nucleotidase family. A divalent metal cation serves as cofactor.

It is found in the cytoplasm. The enzyme catalyses a ribonucleoside 5'-phosphate + H2O = a ribonucleoside + phosphate. In terms of biological role, nucleotidase that shows phosphatase activity on nucleoside 5'-monophosphates. The polypeptide is 5'-nucleotidase SurE (Bordetella avium (strain 197N)).